The sequence spans 1022 residues: Histone-lysine N-methyltransferase TRX1 (1022 aa).

The segment at 31–151 is disordered; it reads SSAPCPLPKK…QRQGVHKEAA (121 aa). Over residues 65–78 the composition is skewed to pro residues; the sequence is EGPPPSPATAPPML. A compositionally biased stretch (basic and acidic residues) spans 127–139; the sequence is GGAERRGYFSEPK. The PWWP domain occupies 264 to 327; it reads PGDLVWAKLT…LKQAVPFLNG (64 aa). The span at 367-393 shows a compositional bias: basic and acidic residues; the sequence is SMEKGSSDANSNKDVHSCDNLSEDKTA. Residues 367-399 form a disordered region; it reads SMEKGSSDANSNKDVHSCDNLSEDKTAESGGDY. The FYR N-terminal domain maps to 402–461; it reads MTPIELGNLRVSKLGRIVTDSDYFHNKKHIWPEGYTAFRKFRSVKDPHVVILYKMEVLRN. The FYR C-terminal domain occupies 465-548; sequence KARPLFRVTS…SCLKYFENAG (84 aa). The Phorbol-ester/DAG-type zinc-finger motif lies at 553-609; the sequence is GYRAVHVNWKDLDYCSVCDMDEEYEDNLFLQCDKCRMMVHARCYGELEPLNGVLWLC. 2 consecutive PHD-type zinc fingers follow at residues 564–615 and 677–744; these read LDYC…CRPE and LLCS…KKHR. Residues 620 to 744 form an extended PHD domain (ePHD) region; that stretch reads SPRCCLCPVT…RLLSYCKKHR (125 aa). The SET domain maps to 861-979; it reads RRLAFGKSRI…PWEELTYDYR (119 aa). A Zn(2+)-binding site is contributed by Cys943. S-adenosyl-L-methionine is bound at residue Tyr978. Positions 985–1001 constitute a Post-SET domain; that stretch reads QRLPCYCGFPKCRGVVN. Cys989, Cys991, and Cys996 together coordinate Zn(2+).

It belongs to the class V-like SAM-binding methyltransferase superfamily. Histone-lysine methyltransferase family. TRX/MLL subfamily. Interacts with EHD3. As to expression, expressed in leaf blades and panicles.

The protein resides in the nucleus. It carries out the reaction L-lysyl(4)-[histone H3] + S-adenosyl-L-methionine = N(6)-methyl-L-lysyl(4)-[histone H3] + S-adenosyl-L-homocysteine + H(+). In terms of biological role, possesses histone H3 methyltransferase activity in vitro. Methylates 'Lys-4' of histone H3. H3 'Lys-4' methylation represents a specific tag for epigenetic transcriptional activation. Functions as a receptor for the lipid messenger phosphatidylinositol 5-phosphate (PI5P), which negatively regulates its transcriptional activation activity. Involved in the regulation of flowering time and floral induction under long day (LD) conditions. Acts as an activator of flowering under LD conditions. May function through binding to EHD3, a repressor of GHD7. The chain is Histone-lysine N-methyltransferase TRX1 from Oryza sativa subsp. japonica (Rice).